We begin with the raw amino-acid sequence, 462 residues long: Fumarate hydratase class II (462 aa).

Residues 97–99 (SGT), 127–130 (HPND), 137–139 (SSN), and threonine 185 each bind substrate. The active-site Proton donor/acceptor is the histidine 186. Serine 316 is a catalytic residue. Substrate-binding positions include serine 317 and 322–324 (KVN).

Belongs to the class-II fumarase/aspartase family. Fumarase subfamily. As to quaternary structure, homotetramer.

The protein localises to the cytoplasm. It carries out the reaction (S)-malate = fumarate + H2O. It functions in the pathway carbohydrate metabolism; tricarboxylic acid cycle; (S)-malate from fumarate: step 1/1. In terms of biological role, involved in the TCA cycle. Catalyzes the stereospecific interconversion of fumarate to L-malate. The chain is Fumarate hydratase class II from Bacillus subtilis (strain 168).